The chain runs to 158 residues: 6,7-dimethyl-8-ribityllumazine synthase (158 aa).

5-amino-6-(D-ribitylamino)uracil contacts are provided by residues Phe-22, 57 to 59, and 81 to 83; these read AVE and AVI. 86–87 contributes to the (2S)-2-hydroxy-3-oxobutyl phosphate binding site; that stretch reads GT. Catalysis depends on His-89, which acts as the Proton donor. Position 114 (Phe-114) interacts with 5-amino-6-(D-ribitylamino)uracil. A (2S)-2-hydroxy-3-oxobutyl phosphate-binding site is contributed by Arg-128.

Belongs to the DMRL synthase family. As to quaternary structure, forms an icosahedral capsid composed of 60 subunits, arranged as a dodecamer of pentamers.

It carries out the reaction (2S)-2-hydroxy-3-oxobutyl phosphate + 5-amino-6-(D-ribitylamino)uracil = 6,7-dimethyl-8-(1-D-ribityl)lumazine + phosphate + 2 H2O + H(+). It functions in the pathway cofactor biosynthesis; riboflavin biosynthesis; riboflavin from 2-hydroxy-3-oxobutyl phosphate and 5-amino-6-(D-ribitylamino)uracil: step 1/2. Its function is as follows. Catalyzes the formation of 6,7-dimethyl-8-ribityllumazine by condensation of 5-amino-6-(D-ribitylamino)uracil with 3,4-dihydroxy-2-butanone 4-phosphate. This is the penultimate step in the biosynthesis of riboflavin. The protein is 6,7-dimethyl-8-ribityllumazine synthase of Shewanella frigidimarina (strain NCIMB 400).